A 398-amino-acid chain; its full sequence is O-methyltransferase mpaG (398 aa).

Serine 144 is a binding site for (4E,8E)-10-(4,6-dihydroxy-7-methyl-3-oxo-1,3-dihydro-2-benzofuran-5-yl)-4,8-dimethyldeca-4,8-dienoate. Serine 144 provides a ligand contact to 4-farnesyl-3,5-dihydroxy-6-methylphthalide. Residue serine 144 participates in 6-O-desmethylmycophenolate binding. Asparagine 197 is an S-adenosyl-L-homocysteine binding site. Tyrosine 199 lines the (4E,8E)-10-(4,6-dihydroxy-7-methyl-3-oxo-1,3-dihydro-2-benzofuran-5-yl)-4,8-dimethyldeca-4,8-dienoate pocket. Position 199 (tyrosine 199) interacts with 4-farnesyl-3,5-dihydroxy-6-methylphthalide. Tyrosine 199 provides a ligand contact to 6-O-desmethylmycophenolate. The S-adenosyl-L-homocysteine site is built by tyrosine 203, aspartate 237, glycine 239, histidine 244, aspartate 245, aspartate 264, and arginine 265. Residue aspartate 264 participates in S-adenosyl-L-methionine binding. Arginine 265 and glutamine 267 together coordinate (4E,8E)-10-(4,6-dihydroxy-7-methyl-3-oxo-1,3-dihydro-2-benzofuran-5-yl)-4,8-dimethyldeca-4,8-dienoate. Position 265 (arginine 265) interacts with 6-O-desmethylmycophenolate. Positions 286, 287, and 302 each coordinate S-adenosyl-L-homocysteine. (4E,8E)-10-(4,6-dihydroxy-7-methyl-3-oxo-1,3-dihydro-2-benzofuran-5-yl)-4,8-dimethyldeca-4,8-dienoate is bound at residue serine 303. Serine 303 is a binding site for 4-farnesyl-3,5-dihydroxy-6-methylphthalide. Serine 303 lines the 6-O-desmethylmycophenolate pocket. The active-site Proton acceptor is histidine 306. Residues glutamate 335 and glutamate 362 contribute to the active site.

It belongs to the class I-like SAM-binding methyltransferase superfamily. Cation-independent O-methyltransferase family. COMT subfamily. As to quaternary structure, homodimer.

The protein localises to the cytoplasm. It is found in the cytosol. It carries out the reaction (4E,8E)-10-(4,6-dihydroxy-7-methyl-3-oxo-1,3-dihydro-2-benzofuran-5-yl)-4,8-dimethyldeca-4,8-dienoate + S-adenosyl-L-methionine = (4E,8E)-10-(4-hydroxy-6-methoxy-7-methyl-3-oxo-1,3-dihydro-2-benzofuran-5-yl)-4,8-dimethyldeca-4,8-dienoate + S-adenosyl-L-homocysteine + H(+). The enzyme catalyses 4-farnesyl-3,5-dihydroxy-6-methylphthalide + S-adenosyl-L-methionine = 4-farnesyl-3,5-dihydroxy-6-methoxylphthalide + S-adenosyl-L-homocysteine + H(+). The catalysed reaction is 6-O-desmethylmycophenolate + S-adenosyl-L-methionine = mycophenolate + S-adenosyl-L-homocysteine + H(+). Its pathway is secondary metabolite biosynthesis; terpenoid biosynthesis. O-methyltransferase; part of the gene cluster that mediates the biosynthesis of mycophenolic acid (MPA), the first isolated antibiotic natural product in the world obtained from a culture of Penicillium brevicompactum in 1893. MpaG methylates farnesyl-DHMP-3C (FDHMP-3C) to yield MFDHMP-3C. The first step of the pathway is the synthesis of 5-methylorsellinic acid (5MOA) by the cytosolic polyketide synthase mpaC. 5MOA is then converted to the phthalide compound 5,7-dihydroxy-4,6-dimethylphthalide (DHMP) by the endoplasmic reticulum-bound cytochrome P450 monooxygenase mpaDE. MpaDE first catalyzes hydroxylation of 5-MOA to 4,6-dihydroxy-2-(hydroxymethyl)-3-methylbenzoic acid (DHMB). MpaDE then acts as a lactone synthase that catalyzes the ring closure to convert DHMB into DHMP. The next step is the prenylation of DHMP by the Golgi apparatus-associated prenyltransferase mpaA to yield farnesyl-DHMP (FDHMP). The ER-bound oxygenase mpaB then mediates the oxidative cleavage the C19-C20 double bond in FDHMP to yield FDHMP-3C via a mycophenolic aldehyde intermediate. The O-methyltransferase mpaG catalyzes the methylation of FDHMP-3C to yield MFDHMP-3C. MpaG and mpaB can also switch the order in which they act and, in this case, the conversion of FDHMP to MFDHMP-3C can take place via 5-O-methyl-FDHMP (MFDHMP). After the cytosolic methylation of FDHMP-3C, MFDHMP-3C enters into peroxisomes probably via free diffusion due to its low molecular weight. Upon a peroxisomal CoA ligation reaction, catalyzed by a beta-oxidation component enzyme acyl-CoA ligase ACL891, MFDHMP-3C-CoA would then be restricted to peroxisomes for the following beta-oxidation pathway steps. The peroxisomal beta-oxidation machinery than converts MFDHMP-3C-CoA into MPA_CoA, via a beta-oxidation chain-shortening process. Finally mpaH acts as a peroxisomal acyl-CoA hydrolase with high substrate specificity toward MPA-CoA to release the final product MPA. MpaH can also hydrolyze DMMPA-CoA to release demethylmycophenolic acid (DMMPA) that is further converted to MPA by mpaG. This Penicillium brevicompactum protein is O-methyltransferase mpaG.